Consider the following 53-residue polypeptide: Large ribosomal subunit protein bL32c (53 aa).

It belongs to the bacterial ribosomal protein bL32 family.

It localises to the plastid. The protein resides in the chloroplast. The protein is Large ribosomal subunit protein bL32c of Glycine max (Soybean).